The following is a 241-amino-acid chain: DNA repair protein RecO (241 aa).

It belongs to the RecO family.

Involved in DNA repair and RecF pathway recombination. The chain is DNA repair protein RecO from Yersinia pseudotuberculosis serotype O:1b (strain IP 31758).